The primary structure comprises 359 residues: 4-galactosyl-N-acetylglucosaminide 3-alpha-L-fucosyltransferase 9 (359 aa).

Residues 1–11 (MTSTSKGILRP) are Cytoplasmic-facing. Residues 12–32 (FLIVCIILGCFVACLLIYIKP) form a helical; Signal-anchor for type II membrane protein membrane-spanning segment. Over 33–359 (TNSWVFSPME…VGNLEKWFWN (327 aa)) the chain is Lumenal. A glycan (N-linked (GlcNAc...) asparagine) is linked at asparagine 62. The interval 63-168 (ETTILVWVWP…RRDSDIQVPY (106 aa)) is acceptor-binding. Position 75 (glutamine 75) interacts with a beta-D-galactosyl-(1-&gt;4)-N-acetyl-beta-D-glucosaminyl derivative. Intrachain disulfides connect cysteine 82–cysteine 335, cysteine 91–cysteine 338, and cysteine 190–cysteine 238. Asparagine 101 is a glycosylation site (N-linked (GlcNAc...) asparagine). Glutamate 137 serves as a coordination point for a beta-D-galactosyl-(1-&gt;4)-N-acetyl-beta-D-glucosaminyl derivative. The Nucleophile role is filled by glutamate 137. Glutamate 137 contributes to the GDP-beta-L-fucose binding site. Asparagine 153 carries N-linked (GlcNAc...) asparagine glycosylation. Tyrosine 168, valine 192, serine 194, asparagine 195, arginine 202, valine 226, tyrosine 241, asparagine 246, tyrosine 252, glutamate 255, and lysine 256 together coordinate GDP-beta-L-fucose. The segment at 169-326 (GFLTVSTSPF…NWRKDFTVNL (158 aa)) is donor-binding. The acceptor-binding stretch occupies residues 327–359 (PRFWESHACLACDHVKRHQEYKSVGNLEKWFWN).

Belongs to the glycosyltransferase 10 family. As to quaternary structure, homodimer. N-glycosylated with complex-type N-glycans.

The protein localises to the golgi apparatus. It localises to the trans-Golgi network membrane. The protein resides in the golgi apparatus membrane. It carries out the reaction a beta-D-galactosyl-(1-&gt;4)-N-acetyl-beta-D-glucosaminyl derivative + GDP-beta-L-fucose = a beta-D-galactosyl-(1-&gt;4)-[alpha-L-fucosyl-(1-&gt;3)]-N-acetyl-beta-D-glucosaminyl derivative + GDP + H(+). It catalyses the reaction an alpha-Neu5Ac-(2-&gt;3)-beta-D-Gal-(1-&gt;4)-beta-D-GlcNAc-(1-&gt;3)-beta-D-Gal-(1-&gt;4)-beta-D-GlcNAc derivative + GDP-beta-L-fucose = an alpha-Neu5Ac-(2-&gt;3)-beta-D-Gal-(1-&gt;4)-beta-D-GlcNAc-(1-&gt;3)-beta-D-Gal-(1-&gt;4)-[alpha-L-Fuc-(1-&gt;3)]-beta-D-GlcNAc derivative + GDP + H(+). The enzyme catalyses alpha-N-glycoloylneuraminosyl-(2-&gt;3)-beta-D-galactosyl-(1-&gt;4)-N-acetyl-beta-D-glucosaminyl-(1-&gt;3)-beta-D-galactosyl-(1-&gt;4)-N-acetyl-beta-D-glucosaminyl-(1-&gt;3)-beta-D-galactosyl-(1-&gt;4)-beta-D-glucosyl-(1&lt;-&gt;1')-ceramide + GDP-beta-L-fucose = alpha-N-glycoloylneuraminosyl-(2-&gt;3)-beta-D-galactosyl-(1-&gt;4)-N-acetyl-beta-D-glucosaminyl-(1-&gt;3)-beta-D-galactosyl-(1-&gt;4)-[alpha-L-fucosyl-(1-&gt;3)]-N-acetyl-beta-D-glucosaminyl-(1-&gt;3)-beta-D-galactosyl-(1-&gt;4)-beta-D-glucosyl-(1&lt;-&gt;1')-ceramide + GDP + H(+). The catalysed reaction is alpha-D-galactosyl-(1-&gt;3)-beta-D-galactosyl-(1-&gt;4)-N-acetyl-beta-D-glucosaminyl-(1-&gt;3)-beta-D-galactosyl-(1-&gt;4)-beta-D-glucosyl-(1&lt;-&gt;1')-ceramide + GDP-beta-L-fucose = a neolactoside IV(3)-alpha-Gal,III(3)-alpha-Fuc-nLc4Cer + GDP + H(+). It carries out the reaction a neolactoside nLc4Cer + GDP-beta-L-fucose = a neolactoside III(3)-alpha-Fuc-nLc4Cer + GDP + H(+). It catalyses the reaction an N-acetyl-alpha-neuraminyl-(2-&gt;3)-beta-D-galactosyl-(1-&gt;4)-N-acetyl-beta-D-glucosaminyl derivative + GDP-beta-L-fucose = an alpha-Neu5Ac-(2-&gt;3)-beta-D-Gal-(1-&gt;4)-[alpha-L-Fuc-(1-&gt;3)]-beta-D-GlcNAc derivative + GDP + H(+). The enzyme catalyses beta-D-Gal-(1-&gt;4)-beta-D-GlcNAc-(1-&gt;3)-beta-D-Gal-(1-&gt;4)-D-Glc + GDP-beta-L-fucose = beta-D-Gal-(1-&gt;4)-[alpha-L-Fuc-(1-&gt;3)]-beta-D-GlcNAc-(1-&gt;3)-beta-D-Gal-(1-&gt;4)-D-Glc + GDP + H(+). The catalysed reaction is an alpha-L-Fuc-(1-&gt;2)-beta-D-Gal-(1-&gt;4)-beta-D-GlcNAc derivative + GDP-beta-L-fucose = an alpha-L-Fuc-(1-&gt;2)-beta-D-Gal-(1-&gt;4)-[alpha-L-Fuc-(1-&gt;3)]-beta-D-GlcNAc derivative + GDP + H(+). The protein operates within protein modification; protein glycosylation. It participates in glycolipid biosynthesis. With respect to regulation, activated by Mn2+. Its function is as follows. Catalyzes alpha(1-&gt;3) linkage of fucosyl moiety transferred from GDP-beta-L-fucose to N-acetyl glucosamine (GlcNAc) within type 2 lactosamine (LacNAc, beta-D-Gal-(1-&gt;4)-beta-D-GlcNAc-) glycan attached to glycolipids and N- or O-linked glycoproteins. Fucosylates distal type 2 LacNAc and its fucosylated (H-type 2 LacNAc) and sialylated (sialyl-type 2 LacNAc) derivatives to form Lewis x (Lex) (CD15) and Lewis y (Ley) antigenic epitopes involved in cell adhesion and differentiation. Generates Lex epitopes in the brain, presumably playing a role in the maintenance of neuronal stemness and neurite outgrowth in progenitor neural cells. Fucosylates the internal type 2 LacNAc unit of the polylactosamine chain to form VIM-2 antigen that serves as recognition epitope for SELE. Can also modify milk oligosaccharides in particular type 2 tetrasaccharide LNnT. The polypeptide is 4-galactosyl-N-acetylglucosaminide 3-alpha-L-fucosyltransferase 9 (Rattus norvegicus (Rat)).